We begin with the raw amino-acid sequence, 846 residues long: DNA mismatch repair protein MutS (846 aa).

610–617 (GPNMGGKS) lines the ATP pocket.

It belongs to the DNA mismatch repair MutS family.

Its function is as follows. This protein is involved in the repair of mismatches in DNA. It is possible that it carries out the mismatch recognition step. This protein has a weak ATPase activity. In Legionella pneumophila (strain Corby), this protein is DNA mismatch repair protein MutS.